Consider the following 706-residue polypeptide: Zinc transporter foi (706 aa).

Positions 1 to 21 are cleaved as a signal peptide; sequence MARHIMAVCVVCLLCAHRLHC. The Extracellular portion of the chain corresponds to 22-261; that stretch reads QDHIESLLGP…EKDKDIFYVW (240 aa). The segment covering 40-56 has biased composition (polar residues); that stretch reads QDQLNARVYTNLSPSSE. The tract at residues 40–101 is disordered; sequence QDQLNARVYT…HGPTSESRVP (62 aa). N74, N119, N176, N182, N196, and N207 each carry an N-linked (GlcNAc...) asparagine glycan. Residues 262–282 form a helical membrane-spanning segment; it reads IYAFISVFACGILGLVGVAII. Residues 283–292 are Cytoplasmic-facing; the sequence is PFMGSRYYKY. The helical transmembrane segment at 293–313 threads the bilayer; the sequence is IIQYLVALAVGTMTGDALLHL. Residues 314–329 lie on the Extracellular side of the membrane; it reads LPHSLAGQDERGMIMK. Residues 330–350 traverse the membrane as a helical segment; it reads GLGCLGGIIFFYVMEHALTMI. At 351–604 the chain is on the cytoplasmic side; the sequence is SEWRKSVEKK…LIKAGMSVKS (254 aa). Phosphoserine occurs at positions 376, 377, and 381. A helical transmembrane segment spans residues 605–625; the sequence is AVYYNLLTGVLSFIGMIFGIA. The Extracellular portion of the chain corresponds to 626-631; it reads FGQSQD. The chain crosses the membrane as a helical span at residues 632 to 652; it reads VAQWMFAVAAGLFIYIALVDM. Residues 653-665 lie on the Cytoplasmic side of the membrane; the sequence is MPEISASHKSLGQ. The helical transmembrane segment at 666–686 threads the bilayer; the sequence is FLLQILGMLSGVGIMLLIALY. Residues 687-706 are Extracellular-facing; sequence EGDLMSAFGTAGAASHQHAH.

Belongs to the ZIP transporter (TC 2.A.5) family. Glycosylated. As to expression, maternal foi has almost completely disappeared by embryonic stage 3 except in the pole cells. In stage 6 embryos, expression is enriched in the invaginating mesoderm. In stage 9 embryos, high levels in the anterior and posterior midgut primordia. In stage 14 embryos, broad expression with low levels in the epidermis.

Its subcellular location is the cell membrane. Functionally, required for the normal migration of longitudinal and peripheral glial cells. During larval development, required for the migration of the subretinal glia into the eye disk. During embryonic development, also controls the migration of muscle cells toward their attachment sites. Required in the mesoderm for the correct morphogenesis of embryonic gonad and for tracheal branch fusion during tracheal development. Shg may be cooperating with foi to mediate a common mechanism for gonad and tracheal morphogenesis. Acts as a zinc transporter in both yeast and mammalian cells. The protein is Zinc transporter foi of Drosophila melanogaster (Fruit fly).